A 319-amino-acid polypeptide reads, in one-letter code: Ankyrin repeat domain-containing protein 1 (319 aa).

The stretch at 63 to 89 (EKQLEAELKKKKLEQRSKLENLEDLEI) forms a coiled coil. ANK repeat units follow at residues 152 to 181 (YKRT…QIEF), 185 to 214 (LEST…KISA), 218 to 247 (LLST…DLNA), 251 to 280 (EGDT…DLTI), and 284 to 315 (AGKT…KTSR).

Interacts with TTN/titin and YBX1.

Its subcellular location is the nucleus. Functionally, may play an important role in endothelial cell activation. May act as a nuclear transcription factor that negatively regulates the expression of cardiac genes. This Oryctolagus cuniculus (Rabbit) protein is Ankyrin repeat domain-containing protein 1 (ANKRD1).